Consider the following 230-residue polypeptide: Sugar fermentation stimulation protein homolog (230 aa).

The protein belongs to the SfsA family.

This chain is Sugar fermentation stimulation protein homolog, found in Clostridium perfringens (strain SM101 / Type A).